The primary structure comprises 266 residues: Putative pyruvate, phosphate dikinase regulatory protein (266 aa).

ADP is bound at residue 147–154; the sequence is GLSRTSKT.

It belongs to the pyruvate, phosphate/water dikinase regulatory protein family. PDRP subfamily.

The enzyme catalyses N(tele)-phospho-L-histidyl/L-threonyl-[pyruvate, phosphate dikinase] + ADP = N(tele)-phospho-L-histidyl/O-phospho-L-threonyl-[pyruvate, phosphate dikinase] + AMP + H(+). It catalyses the reaction N(tele)-phospho-L-histidyl/O-phospho-L-threonyl-[pyruvate, phosphate dikinase] + phosphate + H(+) = N(tele)-phospho-L-histidyl/L-threonyl-[pyruvate, phosphate dikinase] + diphosphate. Functionally, bifunctional serine/threonine kinase and phosphorylase involved in the regulation of the pyruvate, phosphate dikinase (PPDK) by catalyzing its phosphorylation/dephosphorylation. The polypeptide is Putative pyruvate, phosphate dikinase regulatory protein (Clostridium perfringens (strain 13 / Type A)).